Here is a 630-residue protein sequence, read N- to C-terminus: Probable potassium transport system protein Kup 1 (630 aa).

12 helical membrane passes run 15–35 (FAAL…TSPL), 59–79 (LSLI…TFIM), 109–129 (WIMI…MVTP), 145–165 (PALK…LFFV), 173–193 (VGAF…LLGV), 223–243 (LVAM…YADM), 255–275 (WFAF…ALIL), 297–317 (LVGL…SGAF), 345–365 (IYLP…VLGF), 374–394 (AYGI…TVVV), 405–425 (AGLL…ANIL), and 427–447 (IPDG…LMTT).

This sequence belongs to the HAK/KUP transporter (TC 2.A.72) family.

It localises to the cell inner membrane. The enzyme catalyses K(+)(in) + H(+)(in) = K(+)(out) + H(+)(out). Functionally, transport of potassium into the cell. Likely operates as a K(+):H(+) symporter. This is Probable potassium transport system protein Kup 1 from Dechloromonas aromatica (strain RCB).